Consider the following 137-residue polypeptide: Putative pre-16S rRNA nuclease (137 aa).

Belongs to the YqgF nuclease family.

It localises to the cytoplasm. In terms of biological role, could be a nuclease involved in processing of the 5'-end of pre-16S rRNA. This Mycoplasmopsis synoviae (strain 53) (Mycoplasma synoviae) protein is Putative pre-16S rRNA nuclease.